The sequence spans 559 residues: Thermosome subunit alpha (559 aa).

Positions 536–552 (SGEKKGEKKEGGEEEKS) are enriched in basic and acidic residues. Positions 536–559 (SGEKKGEKKEGGEEEKSSTPSSLE) are disordered.

It belongs to the TCP-1 chaperonin family. Forms a Heterooligomeric complex of two stacked nine-membered rings; one of alpha and the other of beta subunits.

Functionally, molecular chaperone; binds unfolded polypeptides in vitro, and has a weak ATPase activity. The polypeptide is Thermosome subunit alpha (thsA) (Sulfurisphaera tokodaii (strain DSM 16993 / JCM 10545 / NBRC 100140 / 7) (Sulfolobus tokodaii)).